Consider the following 584-residue polypeptide: PE-PGRS family protein PE_PGRS11 (584 aa).

The PE domain occupies 1-92 (MSFVIVARDA…AATSYAVTEV (92 aa)). The active-site Tele-phosphohistidine intermediate is the His290. Glu365 functions as the Proton donor/acceptor in the catalytic mechanism. Residues 384-584 (YLVGPIAWTL…LPIGLPSLIP (201 aa)) are phosphoglycerate mutase.

It in the N-terminal section; belongs to the mycobacterial PE family. PGRS subfamily. The protein in the C-terminal section; belongs to the phosphoglycerate mutase family. Interacts with human TLR2. Mg(2+) is required as a cofactor.

It localises to the secreted. It is found in the cell wall. The protein localises to the cell surface. It catalyses the reaction (2R)-2-phosphoglycerate = (2R)-3-phosphoglycerate. Functionally, induces maturation and activation of human dendritic cells (DCs), via TLR2-dependent activation of ERK1/2, p38 MAPK, and NF-kappa-B signaling pathways, and enhances the ability of DCs to stimulate CD4(+) T cells. By activating DCs, could potentially contribute to the initiation of innate immune responses during tuberculosis infection and hence regulate the clinical course of tuberculosis. Involved in resistance to oxidative stress, via TLR2-dependent activation of the PI3K-ERK1/2-NF-kappa-B signaling pathway and expression of COX-2 and Bcl2. Also abolishes H(2)O(2)-triggered activation of p38 MAPK. The chain is PE-PGRS family protein PE_PGRS11 from Mycobacterium tuberculosis (strain ATCC 25618 / H37Rv).